Consider the following 386-residue polypeptide: Succinate--CoA ligase [ADP-forming] subunit beta (386 aa).

Positions 9-244 (KAVLRSYGVS…LDEEDSKEIE (236 aa)) constitute an ATP-grasp domain. Residues K46, 53–55 (GRG), E99, C102, and E107 contribute to the ATP site. Mg(2+) is bound by residues N199 and D213. Substrate is bound by residues N264 and 321 to 323 (GIM).

This sequence belongs to the succinate/malate CoA ligase beta subunit family. As to quaternary structure, heterotetramer of two alpha and two beta subunits. It depends on Mg(2+) as a cofactor.

It catalyses the reaction succinate + ATP + CoA = succinyl-CoA + ADP + phosphate. The enzyme catalyses GTP + succinate + CoA = succinyl-CoA + GDP + phosphate. It functions in the pathway carbohydrate metabolism; tricarboxylic acid cycle; succinate from succinyl-CoA (ligase route): step 1/1. Its function is as follows. Succinyl-CoA synthetase functions in the citric acid cycle (TCA), coupling the hydrolysis of succinyl-CoA to the synthesis of either ATP or GTP and thus represents the only step of substrate-level phosphorylation in the TCA. The beta subunit provides nucleotide specificity of the enzyme and binds the substrate succinate, while the binding sites for coenzyme A and phosphate are found in the alpha subunit. The polypeptide is Succinate--CoA ligase [ADP-forming] subunit beta (Bacillus cereus (strain B4264)).